Here is a 362-residue protein sequence, read N- to C-terminus: Cobalt-precorrin-5B C(1)-methyltransferase (362 aa).

This sequence belongs to the CbiD family.

It carries out the reaction Co-precorrin-5B + S-adenosyl-L-methionine = Co-precorrin-6A + S-adenosyl-L-homocysteine. The protein operates within cofactor biosynthesis; adenosylcobalamin biosynthesis; cob(II)yrinate a,c-diamide from sirohydrochlorin (anaerobic route): step 6/10. Catalyzes the methylation of C-1 in cobalt-precorrin-5B to form cobalt-precorrin-6A. In Burkholderia orbicola (strain MC0-3), this protein is Cobalt-precorrin-5B C(1)-methyltransferase.